The following is a 472-amino-acid chain: Protein translocase subunit SecD (472 aa).

6 consecutive transmembrane segments (helical) span residues 8 to 28 (ILFT…PLSG), 300 to 320 (TIIN…IIFY), 325 to 347 (VIAD…WTGA), 353 to 375 (GIAG…YERI), 396 to 416 (VFST…VLFF), and 424 to 444 (GFAV…LVVS).

This sequence belongs to the SecD/SecF family. SecD subfamily. Forms a complex with SecF. Part of the essential Sec protein translocation apparatus which comprises SecA, SecYEG and auxiliary proteins SecDF. Other proteins may also be involved.

The protein localises to the cell inner membrane. In terms of biological role, part of the Sec protein translocase complex. Interacts with the SecYEG preprotein conducting channel. SecDF uses the proton motive force (PMF) to complete protein translocation after the ATP-dependent function of SecA. The polypeptide is Protein translocase subunit SecD (Petrotoga mobilis (strain DSM 10674 / SJ95)).